Reading from the N-terminus, the 204-residue chain is MGKDPRKPRGKMSSYAYFVQTRREEHKKKHPEASVNFSEFSKKCSERWKTMSAKEKGKFEDLAKLDKVRYEREMRSYIPPKGEKKKRFKDPNAPKRPSSAFFIFCADFRPQVKGETPGLSIGDVAKKLGEKWNNLTAEDKVPYEKKASRLKEKYEKDITAYRNKGKVPVSMPAKAAAPAKDDDDDDDDDDDDEDDDDDDDEDDE.

2 consecutive DNA-binding regions (HMG box) follow at residues 8–78 and 94–162; these read PRGK…RSYI and PKRP…TAYR. The disordered stretch occupies residues 162-204; the sequence is RNKGKVPVSMPAKAAAPAKDDDDDDDDDDDDEDDDDDDDEDDE. Over residues 181-204 the composition is skewed to acidic residues; sequence DDDDDDDDDDDDEDDDDDDDEDDE.

The protein belongs to the HMGB family.

Its subcellular location is the nucleus. The protein localises to the chromosome. Functionally, binds preferentially single-stranded DNA and unwinds double-stranded DNA. The protein is High mobility group-T protein of Oncorhynchus mykiss (Rainbow trout).